Consider the following 451-residue polypeptide: AAA-ATPase At3g28570, mitochondrial (451 aa).

The N-terminal 48 residues, 1–48, are a transit peptide targeting the mitochondrion; that stretch reads MFAENLTRIGSNVAGLFFVWSTLKRYFPRQIQQLLFNAIQRIPIFKRL. 243 to 250 lines the ATP pocket; the sequence is GPPGTGKS.

This sequence belongs to the AAA ATPase family. BCS1 subfamily. It depends on Mg(2+) as a cofactor.

Its subcellular location is the mitochondrion. It carries out the reaction ATP + H2O = ADP + phosphate + H(+). In Arabidopsis thaliana (Mouse-ear cress), this protein is AAA-ATPase At3g28570, mitochondrial.